We begin with the raw amino-acid sequence, 157 residues long: Small ribosomal subunit protein uS7 (157 aa).

Belongs to the universal ribosomal protein uS7 family. As to quaternary structure, part of the 30S ribosomal subunit. Contacts proteins S9 and S11.

Its function is as follows. One of the primary rRNA binding proteins, it binds directly to 16S rRNA where it nucleates assembly of the head domain of the 30S subunit. Is located at the subunit interface close to the decoding center, probably blocks exit of the E-site tRNA. The protein is Small ribosomal subunit protein uS7 of Borrelia garinii subsp. bavariensis (strain ATCC BAA-2496 / DSM 23469 / PBi) (Borreliella bavariensis).